We begin with the raw amino-acid sequence, 443 residues long: Glutamyl-tRNA reductase (443 aa).

Substrate-binding positions include 49–52, Ser109, 114–116, and Gln120; these read TCNR and ETQ. Cys50 functions as the Nucleophile in the catalytic mechanism. 189–194 lines the NADP(+) pocket; the sequence is GAGDMS.

This sequence belongs to the glutamyl-tRNA reductase family. In terms of assembly, homodimer.

It catalyses the reaction (S)-4-amino-5-oxopentanoate + tRNA(Glu) + NADP(+) = L-glutamyl-tRNA(Glu) + NADPH + H(+). Its pathway is porphyrin-containing compound metabolism; protoporphyrin-IX biosynthesis; 5-aminolevulinate from L-glutamyl-tRNA(Glu): step 1/2. Functionally, catalyzes the NADPH-dependent reduction of glutamyl-tRNA(Glu) to glutamate 1-semialdehyde (GSA). This Staphylococcus saprophyticus subsp. saprophyticus (strain ATCC 15305 / DSM 20229 / NCIMB 8711 / NCTC 7292 / S-41) protein is Glutamyl-tRNA reductase.